Here is a 253-residue protein sequence, read N- to C-terminus: MIPPLSSLVRYDNPVLVSTSKDKGKGAKGTPGKKGALPPVEQKPGLTQTEDILNSILPPREWTEDGQLWVQYVSSTPATRLDVINLQEKLDQQLQQRQARETGICPIREELYAQTFDELIRQVTINCAERGLLLLRVRDEMRMTIAAYQTLYESAVAFGIRKALQTEQGKSEMESRITQLEGDVKDLERQVQEWKFKCEAIEKRESERREVEAKKHKDEVAYLENYAKQLKQQLETFLVPAKKGAPGAPAAAT.

The interval T19–P44 is disordered. Residues I160–V239 adopt a coiled-coil conformation.

The protein belongs to the inner dynein arm light chain family.

It localises to the cytoplasm. Its subcellular location is the cytoskeleton. It is found in the flagellum axoneme. In terms of biological role, plays a dynamic role in flagellar motility. May be necessary for stable assembly of a subset of inner dynein arms or for the binding of these arms to the outer doublet microtubules of the axoneme. This is 28 kDa inner dynein arm light chain, axonemal (IDA4) from Chlamydomonas reinhardtii (Chlamydomonas smithii).